Consider the following 173-residue polypeptide: Translationally-controlled tumor protein homolog (173 aa).

The region spanning 1 to 173 (MIIFKDMITG…FKHGLEEEKV (173 aa)) is the TCTP domain.

It belongs to the TCTP family. In terms of tissue distribution, expressed by the venom gland.

The protein localises to the secreted. In terms of biological role, venom protein that causes edema, enhances vascular permeability and is likely related to the inflammatory activity of the venom. The sequence is that of Translationally-controlled tumor protein homolog from Grammostola rosea (Chilean rose tarantula).